Here is a 330-residue protein sequence, read N- to C-terminus: Phospho-N-acetylmuramoyl-pentapeptide-transferase (330 aa).

Helical transmembrane passes span 3-23 (SVVLGAAVAFFVTVTLGSSFI), 49-69 (TPTMGGVLMLMGLVAGLAVVA), 71-91 (PNPATFSVLLIVAATAGVGLY), 111-131 (FLLLSLVVVLADVMALRYVGV), 145-165 (VLGPGVVGVGLFSVLMLFVIV), 179-199 (GLAAGAGGIALLTYTAIAFLE), 204-224 (LAIICGAMVGAIIGFLWYNSH), 228-248 (IFMGDTGSLAIGGVLSAAAIL), 256-276 (PVIGGLFVIVALSVMIQVVVF), and 307-327 (FWIVQSAFSALGFLMYYFFLY).

This sequence belongs to the glycosyltransferase 4 family. MraY subfamily. Mg(2+) serves as cofactor.

The protein resides in the cell membrane. The enzyme catalyses UDP-N-acetyl-alpha-D-muramoyl-L-alanyl-gamma-D-glutamyl-meso-2,6-diaminopimeloyl-D-alanyl-D-alanine + di-trans,octa-cis-undecaprenyl phosphate = di-trans,octa-cis-undecaprenyl diphospho-N-acetyl-alpha-D-muramoyl-L-alanyl-D-glutamyl-meso-2,6-diaminopimeloyl-D-alanyl-D-alanine + UMP. The protein operates within cell wall biogenesis; peptidoglycan biosynthesis. Catalyzes the initial step of the lipid cycle reactions in the biosynthesis of the cell wall peptidoglycan: transfers peptidoglycan precursor phospho-MurNAc-pentapeptide from UDP-MurNAc-pentapeptide onto the lipid carrier undecaprenyl phosphate, yielding undecaprenyl-pyrophosphoryl-MurNAc-pentapeptide, known as lipid I. The sequence is that of Phospho-N-acetylmuramoyl-pentapeptide-transferase from Rubrobacter xylanophilus (strain DSM 9941 / JCM 11954 / NBRC 16129 / PRD-1).